The primary structure comprises 178 residues: Aspartate carbamoyltransferase regulatory chain (178 aa).

Positions 1–15 (MNDREPNQKESKESV) are enriched in basic and acidic residues. A disordered region spans residues 1–23 (MNDREPNQKESKESVNDAVPRAR). Zn(2+) contacts are provided by C133, C138, C159, and C162.

Belongs to the PyrI family. Contains catalytic and regulatory chains. It depends on Zn(2+) as a cofactor.

Involved in allosteric regulation of aspartate carbamoyltransferase. This chain is Aspartate carbamoyltransferase regulatory chain, found in Haloquadratum walsbyi (strain DSM 16790 / HBSQ001).